Consider the following 214-residue polypeptide: Endothelial cell-specific chemotaxis regulator (214 aa).

The N-terminal stretch at 1-18 (MRLGSAILGLLLLQGYSS) is a signal peptide. Over 19–130 (QPTTTQTSQE…PTPTSESVLT (112 aa)) the chain is Extracellular. Residues 23 to 107 (TQTSQEILQK…DATPSPETTS (85 aa)) are disordered. A compositionally biased stretch (polar residues) spans 28–57 (EILQKSSQVSLVSNQPVTPRSSTMDKQSLS). The segment covering 80-90 (RSSSSSSSSSS) has biased composition (low complexity). Residues 131 to 151 (VAAFGVISFIVILVVVVIILV) form a helical membrane-spanning segment. Residues 152–214 (SVVSLRFKCR…KGSMSAEKIL (63 aa)) are Cytoplasmic-facing. Residues 163–184 (NKESEDPQKPGSSGLSESCSTA) form a disordered region. Positions 172 to 184 (PGSSGLSESCSTA) are enriched in polar residues. 2 positions are modified to phosphoserine: Ser-204 and Ser-207.

The protein belongs to the ECSCR family. In terms of assembly, interacts with FLNA. Interacts with the 20S proteasome subunit PSMA7. In terms of processing, may be heavily O-glycosylated. As to expression, expressed in all tissues examined, highest expression was observed in lung and spleen endothelial cells.

The protein localises to the cell membrane. The protein resides in the cytoplasm. Regulates endothelial chemotaxis and tube formation. Has a role in angiogenesis and apoptosis via modulation of the actin cytoskeleton and facilitation of proteasomal degradation of the apoptosis inhibitors BIRC3/IAP1 and BIRC2/IAP2. The chain is Endothelial cell-specific chemotaxis regulator (Ecscr) from Mus musculus (Mouse).